We begin with the raw amino-acid sequence, 230 residues long: ATP synthase subunit a (230 aa).

5 helical membrane-spanning segments follow: residues 17–37 (LPITQSVLTTWFIMISLFIMA), 78–98 (IFPFVATLWIFILVSNLIGVI), 107–127 (DLSVTASLAMMTFLSVHWFGI), 165–187 (LFGNIMSLQLTALIVLMIAGFLV), and 198–218 (EAIIQAYIFGMLALIYIAGGI).

Belongs to the ATPase A chain family. F-type ATPases have 2 components, CF(1) - the catalytic core - and CF(0) - the membrane proton channel. CF(1) has five subunits: alpha(3), beta(3), gamma(1), delta(1), epsilon(1). CF(0) has three main subunits: a(1), b(2) and c(9-12). The alpha and beta chains form an alternating ring which encloses part of the gamma chain. CF(1) is attached to CF(0) by a central stalk formed by the gamma and epsilon chains, while a peripheral stalk is formed by the delta and b chains.

The protein localises to the cell inner membrane. Its function is as follows. Key component of the proton channel; it plays a direct role in the translocation of protons across the membrane. In Legionella pneumophila (strain Corby), this protein is ATP synthase subunit a.